Here is a 310-residue protein sequence, read N- to C-terminus: ADP-L-glycero-D-manno-heptose-6-epimerase (310 aa).

NADP(+) is bound by residues 10-11 (FI), 31-32 (DN), Lys38, Lys53, 75-79 (EGACS), and Asn92. The Proton acceptor role is filled by Tyr140. Lys144 lines the NADP(+) pocket. Position 169 (Asn169) interacts with substrate. NADP(+)-binding residues include Val170 and Lys178. The active-site Proton acceptor is the Lys178. Substrate is bound by residues Ser180, His187, 201 to 204 (FSGS), Arg209, and Tyr272.

The protein belongs to the NAD(P)-dependent epimerase/dehydratase family. HldD subfamily. In terms of assembly, homopentamer. NADP(+) is required as a cofactor.

The catalysed reaction is ADP-D-glycero-beta-D-manno-heptose = ADP-L-glycero-beta-D-manno-heptose. It participates in nucleotide-sugar biosynthesis; ADP-L-glycero-beta-D-manno-heptose biosynthesis; ADP-L-glycero-beta-D-manno-heptose from D-glycero-beta-D-manno-heptose 7-phosphate: step 4/4. Catalyzes the interconversion between ADP-D-glycero-beta-D-manno-heptose and ADP-L-glycero-beta-D-manno-heptose via an epimerization at carbon 6 of the heptose. In Pectobacterium atrosepticum (strain SCRI 1043 / ATCC BAA-672) (Erwinia carotovora subsp. atroseptica), this protein is ADP-L-glycero-D-manno-heptose-6-epimerase.